A 378-amino-acid polypeptide reads, in one-letter code: Probable 3-hydroxyisobutyryl-CoA hydrolase 3 (378 aa).

Residues glutamate 138 and aspartate 146 each coordinate substrate.

It belongs to the enoyl-CoA hydratase/isomerase family.

It is found in the peroxisome. The enzyme catalyses 3-hydroxy-2-methylpropanoyl-CoA + H2O = 3-hydroxy-2-methylpropanoate + CoA + H(+). It functions in the pathway amino-acid degradation; L-valine degradation. Involved in valine catabolism. In Arabidopsis thaliana (Mouse-ear cress), this protein is Probable 3-hydroxyisobutyryl-CoA hydrolase 3.